Here is a 343-residue protein sequence, read N- to C-terminus: SUMO-activating enzyme subunit aos-1 (343 aa).

The protein belongs to the ubiquitin-activating E1 family. In terms of assembly, heterodimer of aos-1 and uba-2.

The protein operates within protein modification; protein sumoylation. Its function is as follows. The dimeric enzyme acts as an E1 ligase for smo-1. It mediates ATP-dependent activation of smo-1 and formation of a thioester with a conserved cysteine residue on uba-2. The polypeptide is SUMO-activating enzyme subunit aos-1 (aos-1) (Caenorhabditis elegans).